We begin with the raw amino-acid sequence, 840 residues long: Translation initiation factor IF-2 (840 aa).

Disordered regions lie at residues 94-157 and 169-256; these read KRSP…AGAE and PVAK…PTGP. Residues 95 to 143 are compositionally biased toward basic and acidic residues; the sequence is RSPDEIEAERQRELEEQRAAEEAERLKAEEAAARQRAEEEARKAEEAAR. Positions 144–157 are enriched in low complexity; sequence AKAAQEAAATAGAE. 2 stretches are compositionally biased toward basic and acidic residues: residues 175–191 and 223–232; these read AVEE…PKRD and STDEESDGYR. Residues 233–247 are compositionally biased toward basic residues; sequence RGGRGGKSKLKKRNQ. The tr-type G domain occupies 340–509; that stretch reads TRAPVVTVMG…LLQAEVLELK (170 aa). A G1 region spans residues 349 to 356; the sequence is GHVDHGKT. Position 349 to 356 (349 to 356) interacts with GTP; that stretch reads GHVDHGKT. The segment at 374–378 is G2; that stretch reads GITQH. The interval 395–398 is G3; it reads DTPG. Residues 395–399 and 449–452 each bind GTP; these read DTPGH and NKID. The interval 449–452 is G4; it reads NKID. A G5 region spans residues 485 to 487; that stretch reads SAK.

It belongs to the TRAFAC class translation factor GTPase superfamily. Classic translation factor GTPase family. IF-2 subfamily.

The protein localises to the cytoplasm. In terms of biological role, one of the essential components for the initiation of protein synthesis. Protects formylmethionyl-tRNA from spontaneous hydrolysis and promotes its binding to the 30S ribosomal subunits. Also involved in the hydrolysis of GTP during the formation of the 70S ribosomal complex. The protein is Translation initiation factor IF-2 of Pseudomonas aeruginosa (strain UCBPP-PA14).